The following is a 957-amino-acid chain: Glycine dehydrogenase (decarboxylating) (957 aa).

Lysine 708 is subject to N6-(pyridoxal phosphate)lysine.

It belongs to the GcvP family. The glycine cleavage system is composed of four proteins: P, T, L and H. Pyridoxal 5'-phosphate serves as cofactor.

The catalysed reaction is N(6)-[(R)-lipoyl]-L-lysyl-[glycine-cleavage complex H protein] + glycine + H(+) = N(6)-[(R)-S(8)-aminomethyldihydrolipoyl]-L-lysyl-[glycine-cleavage complex H protein] + CO2. The glycine cleavage system catalyzes the degradation of glycine. The P protein binds the alpha-amino group of glycine through its pyridoxal phosphate cofactor; CO(2) is released and the remaining methylamine moiety is then transferred to the lipoamide cofactor of the H protein. This chain is Glycine dehydrogenase (decarboxylating), found in Salmonella dublin (strain CT_02021853).